Here is a 187-residue protein sequence, read N- to C-terminus: Ponticulin-like protein K (187 aa).

The N-terminal stretch at Met1–Ser19 is a signal peptide. N-linked (GlcNAc...) asparagine glycans are attached at residues Asn31, Asn70, Asn86, Asn93, Asn119, Asn128, Asn146, Asn160, and Asn161. A compositionally biased stretch (low complexity) spans Pro115–Asn146. A disordered region spans residues Pro115–Asn161. The segment covering Gln147 to Asn161 has biased composition (polar residues). A lipid anchor (GPI-like-anchor amidated asparagine) is attached at Asn161. The propeptide at Ser162 to Ile187 is removed in mature form.

This sequence belongs to the ponticulin family. In terms of processing, the GPI-like-anchor contains a phosphoceramide group, rather than a phosphatidyl group.

The protein localises to the cell membrane. Binds F-actin and nucleates actin assembly. This chain is Ponticulin-like protein K (ponK), found in Dictyostelium discoideum (Social amoeba).